The following is a 359-amino-acid chain: Phospho-N-acetylmuramoyl-pentapeptide-transferase (359 aa).

A run of 10 helical transmembrane segments spans residues 26–46 (TIYG…WVIN), 73–93 (TMGG…WADL), 98–118 (ILIT…DDYL), 134–154 (FLVQ…CPDF), 166–186 (FTPD…VGTS), 197–217 (GLAI…AYVA), 234–254 (CGEI…FLWF), 261–281 (VFMG…IAVI), 286–306 (ILLL…IIQV), and 338–358 (IVRF…TLKI).

Belongs to the glycosyltransferase 4 family. MraY subfamily. It depends on Mg(2+) as a cofactor.

Its subcellular location is the cell inner membrane. The enzyme catalyses UDP-N-acetyl-alpha-D-muramoyl-L-alanyl-gamma-D-glutamyl-meso-2,6-diaminopimeloyl-D-alanyl-D-alanine + di-trans,octa-cis-undecaprenyl phosphate = di-trans,octa-cis-undecaprenyl diphospho-N-acetyl-alpha-D-muramoyl-L-alanyl-D-glutamyl-meso-2,6-diaminopimeloyl-D-alanyl-D-alanine + UMP. It participates in cell wall biogenesis; peptidoglycan biosynthesis. In terms of biological role, catalyzes the initial step of the lipid cycle reactions in the biosynthesis of the cell wall peptidoglycan: transfers peptidoglycan precursor phospho-MurNAc-pentapeptide from UDP-MurNAc-pentapeptide onto the lipid carrier undecaprenyl phosphate, yielding undecaprenyl-pyrophosphoryl-MurNAc-pentapeptide, known as lipid I. This chain is Phospho-N-acetylmuramoyl-pentapeptide-transferase, found in Desulforapulum autotrophicum (strain ATCC 43914 / DSM 3382 / VKM B-1955 / HRM2) (Desulfobacterium autotrophicum).